The chain runs to 284 residues: Deoxyribonuclease-1 (284 aa).

A signal peptide spans 1–22; the sequence is MRGARLMGALLALAGLLQGALA. N40 is a glycosylation site (N-linked (GlcNAc...) asparagine). E100 is a catalytic residue. Residues C123 and C126 are joined by a disulfide bond. N128 is a glycosylation site (N-linked (GlcNAc...) asparagine). H156 is a catalytic residue. Residues C195 and C231 are joined by a disulfide bond.

Belongs to the DNase I family. Ca(2+) serves as cofactor. It depends on Mg(2+) as a cofactor. In terms of tissue distribution, highest expression in pancreas.

Its subcellular location is the secreted. It localises to the zymogen granule. The protein resides in the nucleus envelope. It carries out the reaction Endonucleolytic cleavage to 5'-phosphodinucleotide and 5'-phosphooligonucleotide end-products.. Functionally, serum endocuclease secreted into body fluids by a wide variety of exocrine and endocrine organs. Expressed by non-hematopoietic tissues and preferentially cleaves protein-free DNA. Among other functions, seems to be involved in cell death by apoptosis. Binds specifically to G-actin and blocks actin polymerization. Together with DNASE1L3, plays a key role in degrading neutrophil extracellular traps (NETs). NETs are mainly composed of DNA fibers and are released by neutrophils to bind pathogens during inflammation. Degradation of intravascular NETs by DNASE1 and DNASE1L3 is required to prevent formation of clots that obstruct blood vessels and cause organ damage following inflammation. In Canis lupus familiaris (Dog), this protein is Deoxyribonuclease-1 (DNASE1).